A 378-amino-acid chain; its full sequence is MDAAHWHQGLGLVKPMEEMLMAANAAAGANPNPAATAPSSVTGGALRGGGGGGAPPVAGGAGAGSTERRARPQKEKALNCPRCNSTNTKFCYYNNYSLQQPRYFCKTCRRYWTEGGSLRNVPVGGGSRKNKRSSSSAASASPASASTANSVVTSASMSMSMASTGGGASKNPKLVHEGAQDLNLAFPHHGGLQAPGEFPAFPSLESSSVCNPGGPMGTNGRGGGALSAMELLRSTGCYMPLQVPMQMPAEYATPGFALGEFRAPPPPPQSSQSLLGFSLDAHGSVGGPSAAGFGSSAGLQGVPESTGRLLFPFEDLKPTVSSGTGGGGASGGGAGVDGGHQFDHGKEQQAGGGGGGPGGHDTPGFWNGMIGGGSGTSW.

Residues 28 to 38 are compositionally biased toward low complexity; the sequence is GANPNPAATAP. The disordered stretch occupies residues 28–79; sequence GANPNPAATAPSSVTGGALRGGGGGGAPPVAGGAGAGSTERRARPQKEKALN. Residues 45–63 show a composition bias toward gly residues; it reads ALRGGGGGGAPPVAGGAGA. Basic and acidic residues predominate over residues 66 to 77; the sequence is TERRARPQKEKA. Residues 78–132 form a Dof-type zinc finger; that stretch reads LNCPRCNSTNTKFCYYNNYSLQQPRYFCKTCRRYWTEGGSLRNVPVGGGSRKNKR. C80, C83, C105, and C108 together coordinate Zn(2+). Disordered regions lie at residues 116 to 148, 203 to 222, and 316 to 378; these read GSLRNVPVGGGSRKNKRSSSSAASASPASASTA, SLESSSVCNPGGPMGTNGRG, and LKPT…GTSW. Residues 133–148 are compositionally biased toward low complexity; sequence SSSSAASASPASASTA. 3 stretches are compositionally biased toward gly residues: residues 323–338, 350–361, and 369–378; these read GTGGGGASGGGAGVDG, AGGGGGGPGGHD, and MIGGGSGTSW.

The protein resides in the nucleus. Transcription factor that may transactivate seed storage protein genes in developing seeds. This Oryza sativa subsp. japonica (Rice) protein is Dof zinc finger protein 1.